A 61-amino-acid chain; its full sequence is uncharacterized protein (61 aa).

Helical transmembrane passes span 7–24 and 29–48; these read FNVFCIVALGSIYGYKLF and VSTTRLIIASVIVLWNIVGL.

The protein resides in the cell membrane. This is an uncharacterized protein from Bacillus subtilis (strain 168).